Here is a 176-residue protein sequence, read N- to C-terminus: ATP synthase subunit b (176 aa).

The chain crosses the membrane as a helical span at residues 7–27; that stretch reads IQIPDGSAIFVLLTFILLMFI. Residues 75–94 are disordered; the sequence is SQSQATALMENARKSSEEQS. A compositionally biased stretch (basic and acidic residues) spans 85–94; sequence NARKSSEEQS.

Belongs to the ATPase B chain family. As to quaternary structure, F-type ATPases have 2 components, F(1) - the catalytic core - and F(0) - the membrane proton channel. F(1) has five subunits: alpha(3), beta(3), gamma(1), delta(1), epsilon(1). F(0) has three main subunits: a(1), b(2) and c(10-14). The alpha and beta chains form an alternating ring which encloses part of the gamma chain. F(1) is attached to F(0) by a central stalk formed by the gamma and epsilon chains, while a peripheral stalk is formed by the delta and b chains.

It is found in the cell membrane. Its function is as follows. F(1)F(0) ATP synthase produces ATP from ADP in the presence of a proton or sodium gradient. F-type ATPases consist of two structural domains, F(1) containing the extramembraneous catalytic core and F(0) containing the membrane proton channel, linked together by a central stalk and a peripheral stalk. During catalysis, ATP synthesis in the catalytic domain of F(1) is coupled via a rotary mechanism of the central stalk subunits to proton translocation. Functionally, component of the F(0) channel, it forms part of the peripheral stalk, linking F(1) to F(0). The sequence is that of ATP synthase subunit b from Oenococcus oeni (strain ATCC BAA-331 / PSU-1).